Here is a 61-residue protein sequence, read N- to C-terminus: Small ribosomal subunit protein uS14 (61 aa).

Zn(2+) is bound by residues Cys24, Cys27, Cys40, and Cys43.

This sequence belongs to the universal ribosomal protein uS14 family. Zinc-binding uS14 subfamily. As to quaternary structure, part of the 30S ribosomal subunit. Contacts proteins S3 and S10. The cofactor is Zn(2+).

Binds 16S rRNA, required for the assembly of 30S particles and may also be responsible for determining the conformation of the 16S rRNA at the A site. In Desulfitobacterium hafniense (strain Y51), this protein is Small ribosomal subunit protein uS14.